Here is a 364-residue protein sequence, read N- to C-terminus: GDSL esterase/lipase 7 (364 aa).

The first 19 residues, 1–19, serve as a signal peptide directing secretion; sequence MKSLLICLVLLELVWLGNG. Serine 37 serves as the catalytic Nucleophile. N-linked (GlcNAc...) asparagine glycosylation is found at asparagine 236, asparagine 237, and asparagine 264. Residues aspartate 329 and histidine 332 contribute to the active site. A glycan (N-linked (GlcNAc...) asparagine) is linked at asparagine 351.

Belongs to the 'GDSL' lipolytic enzyme family.

It is found in the secreted. The chain is GDSL esterase/lipase 7 (GLIP7) from Arabidopsis thaliana (Mouse-ear cress).